The chain runs to 375 residues: MTQTRQQLGKARRWIIKIGSALLTNEGRGLDHEALAGWAEQIARLRASGREVVLVSSGAVAEGMSRLGWTTRPHALHELQAAAAVGQMGLVQAYESIFQRHGLRAAQVLLTHDDLSNRRRYLNARSTLRTLLALGVIPVVNENDTVATDEIRFGDNDTLAALVGNLTEAQVLVILTDQKGLFDRDPRAHADAQLVSEGLAMDPELLKLAAPTFGQLGRGGMATKLHAAARAARSGAYTLIASGREPRVLERIAEGEQIGTLLCPDKEPLAARKQWIAGQLIAKGELILDTGATKVLREAGRSLLPVGVTHVKGEFSRGDVVTCVDPDGRPVARGLVNYSADEARRIMKHRADEIEGILGYVDEPELIHRDNLVLL.

K17 contacts ATP. Positions 57, 144, and 156 each coordinate substrate. 176 to 177 (TD) contributes to the ATP binding site. The 79-residue stretch at 283–361 (KGELILDTGA…DEIEGILGYV (79 aa)) folds into the PUA domain.

This sequence belongs to the glutamate 5-kinase family.

The protein resides in the cytoplasm. The enzyme catalyses L-glutamate + ATP = L-glutamyl 5-phosphate + ADP. The protein operates within amino-acid biosynthesis; L-proline biosynthesis; L-glutamate 5-semialdehyde from L-glutamate: step 1/2. Functionally, catalyzes the transfer of a phosphate group to glutamate to form L-glutamate 5-phosphate. The sequence is that of Glutamate 5-kinase from Thioalkalivibrio sulfidiphilus (strain HL-EbGR7).